A 173-amino-acid chain; its full sequence is uncharacterized protein (173 aa).

The interval 49-72 (PTRSGRTSNSGNRGPVMTSTSSIN) is disordered.

This is an uncharacterized protein from Human adenovirus B serotype 7 (HAdV-7).